The primary structure comprises 368 residues: Glutamate 5-kinase (368 aa).

Position 13 (K13) interacts with ATP. S54, D141, and N153 together coordinate substrate. 173–174 (SD) serves as a coordination point for ATP. Residues 278 to 355 (RGEITVDAGA…AEIEAVLGYP (78 aa)) form the PUA domain.

It belongs to the glutamate 5-kinase family.

Its subcellular location is the cytoplasm. It catalyses the reaction L-glutamate + ATP = L-glutamyl 5-phosphate + ADP. The protein operates within amino-acid biosynthesis; L-proline biosynthesis; L-glutamate 5-semialdehyde from L-glutamate: step 1/2. Its function is as follows. Catalyzes the transfer of a phosphate group to glutamate to form L-glutamate 5-phosphate. The polypeptide is Glutamate 5-kinase (Dinoroseobacter shibae (strain DSM 16493 / NCIMB 14021 / DFL 12)).